A 563-amino-acid polypeptide reads, in one-letter code: Pyruvate decarboxylase isozyme 1 (563 aa).

The residue at position 2 (Ser2) is an N-acetylserine. Residues Asp28, His115, and Tyr157 each coordinate pyruvate. Residue Arg161 is modified to Omega-N-methylarginine. A Glycyl lysine isopeptide (Lys-Gly) (interchain with G-Cter in ubiquitin) cross-link involves residue Lys212. The residue at position 223 (Ser223) is a Phosphoserine. A pyruvate-binding site is contributed by Arg224. Residue Lys233 forms a Glycyl lysine isopeptide (Lys-Gly) (interchain with G-Cter in ubiquitin) linkage. Thr266 is subject to Phosphothreonine. Residues Lys269 and Lys332 each participate in a glycyl lysine isopeptide (Lys-Gly) (interchain with G-Cter in ubiquitin) cross-link. A phosphothreonine mark is found at Thr336 and Thr353. Thiamine diphosphate contacts are provided by residues Thr390 and 413–415 (GSI). Mg(2+) is bound at residue Asp444. Thiamine diphosphate contacts are provided by residues 445 to 446 (GS) and 471 to 476 (NDGYTI). Positions 471 and 473 each coordinate Mg(2+). Position 477 (Glu477) interacts with pyruvate. Glycyl lysine isopeptide (Lys-Gly) (interchain with G-Cter in ubiquitin) cross-links involve residues Lys484, Lys505, and Lys520. Phosphothreonine is present on Thr522. The residue at position 526 (Ser526) is a Phosphoserine.

This sequence belongs to the TPP enzyme family. Homotetramer. Mg(2+) is required as a cofactor. The cofactor is thiamine diphosphate. Post-translationally, cleavage of N-terminal methionine and N-terminal acetylation by NAT1/ARD1.

It is found in the cytoplasm. The protein resides in the nucleus. The enzyme catalyses pyruvate + H(+) = acetaldehyde + CO2. The catalysed reaction is 3-methyl-2-oxobutanoate + H(+) = 2-methylpropanal + CO2. It carries out the reaction (S)-3-methyl-2-oxopentanoate + H(+) = 2-methylbutanal + CO2. It catalyses the reaction indole-3-pyruvate + H(+) = indole-3-acetaldehyde + CO2. The enzyme catalyses 3-phenylpyruvate + H(+) = 2-phenylacetaldehyde + CO2. The catalysed reaction is 2-oxobutanoate + H(+) = propanal + CO2. It carries out the reaction 2-oxopentanoate + H(+) = butanal + CO2. It catalyses the reaction 2 acetaldehyde = acetoin. The enzyme catalyses acetaldehyde + pyruvate + H(+) = acetoin + CO2. The protein operates within fermentation; ethanol fermentation. It functions in the pathway amino-acid degradation; Ehrlich pathway. With respect to regulation, allosterically activated by its substrate, pyruvate. Functionally, major of three pyruvate decarboxylases (PDC1, PDC5, PDC6) implicated in the nonoxidative conversion of pyruvate to acetaldehyde and carbon dioxide during alcoholic fermentation. Most of the produced acetaldehyde is subsequently reduced to ethanol, but some is required for cytosolic acetyl-CoA production for biosynthetic pathways. The enzyme is also one of five 2-oxo acid decarboxylases (PDC1, PDC5, PDC6, ARO10, and THI3) able to decarboxylate more complex 2-oxo acids (alpha-ketoacids) than pyruvate, which seem mainly involved in amino acid catabolism. Here the enzyme catalyzes the decarboxylation of amino acids, which, in a first step, have been transaminated to the corresponding 2-oxo acids. In a third step, the resulting aldehydes are reduced to alcohols, collectively referred to as fusel oils or alcohols. Its preferred substrates are the transaminated amino acids derived from threonine (2-oxobutanoate), norvaline (2-oxopentanoate), valine (3-methyl-2-oxobutanoate, also alpha-keto-isovalerate), isoleucine ((3S)-3-methyl-2-oxopentanoate, also alpha-keto-beta-methylvalerate), phenylalanine (phenylpyruvate), and tryptophan (3-(indol-3-yl)pyruvate), whereas transaminated leucine is no substrate. In a side-reaction the carbanionic intermediate (or active aldehyde) generated by decarboxylation or by activation of an aldehyde can react with an aldehyde via condensation (or carboligation) yielding a 2-hydroxy ketone, collectively called acyloins. In Saccharomyces cerevisiae (strain ATCC 204508 / S288c) (Baker's yeast), this protein is Pyruvate decarboxylase isozyme 1.